The following is a 743-amino-acid chain: POU domain, class 2, transcription factor 1 (743 aa).

A compositionally biased stretch (polar residues) spans 1 to 11 (MNNPSETSKPS). Disordered regions lie at residues 1 to 34 (MNNP…QPVP), 67 to 95 (SLNV…SVQA), 258 to 283 (ATPI…EEPS), and 357 to 381 (SSDS…RRRK). The span at 81 to 95 (SQQPSQPSQQPSVQA) shows a compositional bias: low complexity. Residues Thr270 and Thr276 each carry the phosphothreonine modification. The 75-residue stretch at 280–354 (EEPSDLEELE…LLEKWLNDAE (75 aa)) folds into the POU-specific domain. Position 283 is a phosphoserine (Ser283). The segment covering 357–371 (SSDSSLSSPSALNSP) has biased composition (low complexity). The segment at residues 379–438 (RRKKRTSIETNIRVALEKSFLENQKPTSEEITMIADQLNMEKEVIRVWFCNRRQKEKRIN) is a DNA-binding region (homeobox). Phosphoserine is present on residues Ser385 and Ser448. The span at 494-504 (VTGTSDTTSNN) shows a compositional bias: polar residues. The segment at 494–557 (VTGTSDTTSN…TTSTPLSSPL (64 aa)) is disordered. The segment covering 505–557 (TATVISTAPPASSAVTSPSLSPSPSASASTSEASSASETSTTQTTSTPLSSPL) has biased composition (low complexity).

This sequence belongs to the POU transcription factor family. Class-2 subfamily. In terms of assembly, interacts with POU2AF1; the interaction increases POU2F1 transactivation activity. Interacts with NR3C1, AR, PGR and HCFC1. As to quaternary structure, (Microbial infection) Associates with the herpes simplex virus VP16-induced complex; binding to HCFC1 activates the viral transcriptional activator VP16 for association with POU2F1, to form a multiprotein-DNA complex responsible for activating transcription of the viral immediate early genes. (Microbial infection) Interacts with human herpesvirus 8 (KSHV) protein RTA/ORF50; this interaction enhances RTA/ORF50-mediated transactivation of several viral promoters including K-bZIP promoter. Post-translationally, phosphorylated by PRKDC. Ubiquitous. Isoform 2 is lymphocyte-specific.

It localises to the nucleus. Transcription factor that binds to the octamer motif (5'-ATTTGCAT-3') and activates the promoters of the genes for some small nuclear RNAs (snRNA) and of genes such as those for histone H2B and immunoglobulins. Modulates transcription transactivation by NR3C1, AR and PGR. Its function is as follows. (Microbial infection) In case of human herpes simplex virus (HSV) infection, POU2F1 forms a multiprotein-DNA complex with the viral transactivator protein VP16 and HCFC1 thereby enabling the transcription of the viral immediate early genes. The protein is POU domain, class 2, transcription factor 1 (POU2F1) of Homo sapiens (Human).